We begin with the raw amino-acid sequence, 261 residues long: Enolase-phosphatase E1 (261 aa).

Mg(2+) is bound by residues Asp-16 and Glu-18. Substrate is bound by residues 150-151 (SS) and Lys-184. Asp-209 is a Mg(2+) binding site.

It belongs to the HAD-like hydrolase superfamily. MasA/MtnC family. As to quaternary structure, monomer. The cofactor is Mg(2+).

The protein resides in the cytoplasm. It is found in the nucleus. It carries out the reaction 5-methylsulfanyl-2,3-dioxopentyl phosphate + H2O = 1,2-dihydroxy-5-(methylsulfanyl)pent-1-en-3-one + phosphate. Its pathway is amino-acid biosynthesis; L-methionine biosynthesis via salvage pathway; L-methionine from S-methyl-5-thio-alpha-D-ribose 1-phosphate: step 3/6. It participates in amino-acid biosynthesis; L-methionine biosynthesis via salvage pathway; L-methionine from S-methyl-5-thio-alpha-D-ribose 1-phosphate: step 4/6. In terms of biological role, bifunctional enzyme that catalyzes the enolization of 2,3-diketo-5-methylthiopentyl-1-phosphate (DK-MTP-1-P) into the intermediate 2-hydroxy-3-keto-5-methylthiopentenyl-1-phosphate (HK-MTPenyl-1-P), which is then dephosphorylated to form the acireductone 1,2-dihydroxy-3-keto-5-methylthiopentene (DHK-MTPene). The sequence is that of Enolase-phosphatase E1 (Enoph1) from Rattus norvegicus (Rat).